Here is a 384-residue protein sequence, read N- to C-terminus: Sphingosine 1-phosphate receptor 3 (384 aa).

Topologically, residues 1–34 (MMINPLIYLHYNYTGKLDHRPTVGTSPGTRDPKT) are extracellular. An N-linked (GlcNAc...) asparagine glycan is attached at N12. A helical transmembrane segment spans residues 35 to 55 (IAFLVVCSFIILENLTVLLAI). Topologically, residues 56–64 (WKNHRFHNR) are cytoplasmic. A helical transmembrane segment spans residues 65–85 (MYFFIGNLALCDLLASVAYLV). Topologically, residues 86–105 (NLLLSGEKTLQLSPVLWFVR) are extracellular. Residues 106–126 (EGSMFVTLGASIFSLLAIAIE) form a helical membrane-spanning segment. Topologically, residues 127 to 144 (RHLTMIKMRPYDASKNYR) are cytoplasmic. The helical transmembrane segment at 145–165 (VFLLIGTCWLVAVLLGALPIL) threads the bilayer. Topologically, residues 166–186 (GWNCLGNLPDCSTILPLYTKK) are extracellular. Residues 187 to 207 (YVAFCIIVFIVLLLAMSVLYA) traverse the membrane as a helical segment. Over 208 to 235 (RIYILVKSSSQKVSKHRNSEHAMSLLRT) the chain is Cytoplasmic. Residues 236-256 (VIIVVGVFIACWMPIFVLLLL) traverse the membrane as a helical segment. Residues 257–271 (DVACERPCPILYKAD) lie on the Extracellular side of the membrane. A helical membrane pass occupies residues 272-292 (WFIAVAVLNSAMNPIIYTLAS). Residues 293-384 (REMRRAFLGL…REGEGGNGGR (92 aa)) lie on the Cytoplasmic side of the membrane. 2 stretches are compositionally biased toward polar residues: residues 315 to 325 (NDSGNKQFQEP) and 336 to 347 (QTHPNQSQQSSR). The disordered stretch occupies residues 315–384 (NDSGNKQFQE…REGEGGNGGR (70 aa)). Residues 349-359 (AELDREQETGH) are compositionally biased toward basic and acidic residues.

It belongs to the G-protein coupled receptor 1 family.

It localises to the cell membrane. Functionally, receptor for the lysosphingolipid sphingosine 1-phosphate (S1P). This Takifugu rubripes (Japanese pufferfish) protein is Sphingosine 1-phosphate receptor 3 (s1pr3).